A 342-amino-acid polypeptide reads, in one-letter code: Glucokinase (342 aa).

An ATP-binding site is contributed by 7–12 (GDIGGT).

It belongs to the bacterial glucokinase family.

It localises to the cytoplasm. It carries out the reaction D-glucose + ATP = D-glucose 6-phosphate + ADP + H(+). The sequence is that of Glucokinase from Nostoc sp. (strain PCC 7120 / SAG 25.82 / UTEX 2576).